The chain runs to 228 residues: Isoprenyl transferase (228 aa).

The active site involves D15. D15 contributes to the Mg(2+) binding site. Substrate-binding positions include 16–19, W20, R28, H32, and 60–62; these read GNGR and STE. N63 functions as the Proton acceptor in the catalytic mechanism. Substrate contacts are provided by residues W64, R66, R176, and 182-184; that span reads RLS. E195 contributes to the Mg(2+) binding site.

The protein belongs to the UPP synthase family. Homodimer. Mg(2+) serves as cofactor.

Its function is as follows. Catalyzes the condensation of isopentenyl diphosphate (IPP) with allylic pyrophosphates generating different type of terpenoids. The polypeptide is Isoprenyl transferase (Wolinella succinogenes (strain ATCC 29543 / DSM 1740 / CCUG 13145 / JCM 31913 / LMG 7466 / NCTC 11488 / FDC 602W) (Vibrio succinogenes)).